The primary structure comprises 107 residues: Large ribosomal subunit protein uL24 (107 aa).

It belongs to the universal ribosomal protein uL24 family. In terms of assembly, part of the 50S ribosomal subunit.

Functionally, one of two assembly initiator proteins, it binds directly to the 5'-end of the 23S rRNA, where it nucleates assembly of the 50S subunit. In terms of biological role, one of the proteins that surrounds the polypeptide exit tunnel on the outside of the subunit. This Streptomyces avermitilis (strain ATCC 31267 / DSM 46492 / JCM 5070 / NBRC 14893 / NCIMB 12804 / NRRL 8165 / MA-4680) protein is Large ribosomal subunit protein uL24.